The chain runs to 156 residues: Isotocin-neurophysin IT 2 (156 aa).

The N-terminal stretch at 1–19 (MTGAAVSVCLLYALSVCSA) is a signal peptide. A disulfide bridge connects residues C20 and C25. A Glycine amide modification is found at G28. 7 disulfide bridges follow: C41–C85, C44–C58, C52–C75, C59–C65, C92–C105, C99–C117, and C106–C111.

The protein belongs to the vasopressin/oxytocin family. Seven disulfide bonds are present in neurophysin.

Its subcellular location is the secreted. Isotocin causes contraction of smooth muscles. This chain is Isotocin-neurophysin IT 2, found in Oncorhynchus keta (Chum salmon).